A 157-amino-acid chain; its full sequence is Endoribonuclease YbeY (157 aa).

His122, His126, and His132 together coordinate Zn(2+).

It belongs to the endoribonuclease YbeY family. Requires Zn(2+) as cofactor.

The protein resides in the cytoplasm. In terms of biological role, single strand-specific metallo-endoribonuclease involved in late-stage 70S ribosome quality control and in maturation of the 3' terminus of the 16S rRNA. This Bacillus velezensis (strain DSM 23117 / BGSC 10A6 / LMG 26770 / FZB42) (Bacillus amyloliquefaciens subsp. plantarum) protein is Endoribonuclease YbeY.